The primary structure comprises 657 residues: Glycogen debranching enzyme (657 aa).

Asp-334 (nucleophile) is an active-site residue. Glu-369 serves as the catalytic Proton donor. The interval 458-485 (ANGEQNRDGTNSNFSFNHGTEGLEADET) is disordered. The span at 465–475 (DGTNSNFSFNH) shows a compositional bias: polar residues.

Belongs to the glycosyl hydrolase 13 family.

Its subcellular location is the cytoplasm. The catalysed reaction is Hydrolysis of (1-&gt;6)-alpha-D-glucosidic linkages to branches with degrees of polymerization of three or four glucose residues in limit dextrin.. The protein operates within glycan degradation; glycogen degradation. Its activity is regulated as follows. Slightly activated by Ca(2+). Inhibited by divalent cations such as Zn(2+), Cu(2+), Fe(2+), Mg(2+), Mn(2+), but only slightly inhibited by EDTA. Its function is as follows. Removes maltotriose and maltotetraose chains that are attached by 1,6-alpha-linkage to the limit dextrin main chain, generating a debranched limit dextrin. Hydrolyzes the alpha-1,6-glycosidic linkages in amylopectin while does not hydrolyze the alpha-1,4-glycosidic linkages in amylose. Native glycogen is a poor substrate. This chain is Glycogen debranching enzyme, found in Dickeya chrysanthemi (Pectobacterium chrysanthemi).